A 545-amino-acid polypeptide reads, in one-letter code: O-phosphoserine--tRNA(Cys) ligase (545 aa).

Substrate contacts are provided by residues 189–191 (HMT), 234–236 (SAS), 276–277 (YY), and asparagine 328.

The protein belongs to the class-II aminoacyl-tRNA synthetase family. O-phosphoseryl-tRNA(Cys) synthetase subfamily. In terms of assembly, homotetramer. Interacts with SepCysS.

It carries out the reaction tRNA(Cys) + O-phospho-L-serine + ATP = O-phospho-L-seryl-tRNA(Cys) + AMP + diphosphate. Its function is as follows. Catalyzes the attachment of O-phosphoserine (Sep) to tRNA(Cys). This Methanothrix thermoacetophila (strain DSM 6194 / JCM 14653 / NBRC 101360 / PT) (Methanosaeta thermophila) protein is O-phosphoserine--tRNA(Cys) ligase.